The following is a 314-amino-acid chain: L-lactate dehydrogenase 2 (314 aa).

NAD(+) is bound by residues Val16, Asp37, Lys42, Tyr68, and 82–83 (GL). Residues Gln85, Arg91, and 123–126 (NPVD) each bind substrate. Residues 121–123 (ATN) and Ser146 contribute to the NAD(+) site. Substrate is bound at residue 151–154 (DSAR). Beta-D-fructose 1,6-bisphosphate is bound by residues Arg156 and His171. The Proton acceptor role is filled by His178. Tyr223 is subject to Phosphotyrosine. Thr232 contacts substrate.

This sequence belongs to the LDH/MDH superfamily. LDH family. As to quaternary structure, homotetramer.

It is found in the cytoplasm. It carries out the reaction (S)-lactate + NAD(+) = pyruvate + NADH + H(+). It functions in the pathway fermentation; pyruvate fermentation to lactate; (S)-lactate from pyruvate: step 1/1. With respect to regulation, allosterically activated by fructose 1,6-bisphosphate (FBP). In terms of biological role, catalyzes the conversion of lactate to pyruvate. This Bacillus cereus (strain ATCC 10987 / NRS 248) protein is L-lactate dehydrogenase 2.